We begin with the raw amino-acid sequence, 146 residues long: DNA utilization protein HofO (146 aa).

Residues 20–37 (WAFWLLMLVTLIFLSSTH) form a helical membrane-spanning segment.

The protein localises to the cell inner membrane. Its function is as follows. Required for the use of extracellular DNA as a nutrient. This is DNA utilization protein HofO (hofO) from Escherichia coli (strain K12).